Reading from the N-terminus, the 519-residue chain is B3 domain-containing protein Os03g0620400 (519 aa).

Residues 26-119 (MKCFHLQMSA…RFEVLILDSD (94 aa)) constitute a DNA-binding region (TF-B3 1). Residues 138-218 (ERNAAPVDIS…DPQMPPGRNY (81 aa)) form a disordered region. A compositionally biased stretch (acidic residues) spans 189–209 (SGEEGTDSSTSEDESSYELDD). DNA-binding regions (TF-B3) lie at residues 249-349 (VAIM…LRET) and 416-516 (YVSI…IRRN).

It is found in the nucleus. The polypeptide is B3 domain-containing protein Os03g0620400 (Oryza sativa subsp. japonica (Rice)).